The sequence spans 230 residues: 7-cyano-7-deazaguanine synthase (230 aa).

14-24 is a binding site for ATP; sequence LSGGLDSTTTL. Residues Cys-194, Cys-204, Cys-207, and Cys-210 each contribute to the Zn(2+) site.

Belongs to the QueC family. It depends on Zn(2+) as a cofactor.

It carries out the reaction 7-carboxy-7-deazaguanine + NH4(+) + ATP = 7-cyano-7-deazaguanine + ADP + phosphate + H2O + H(+). The protein operates within purine metabolism; 7-cyano-7-deazaguanine biosynthesis. Functionally, catalyzes the ATP-dependent conversion of 7-carboxy-7-deazaguanine (CDG) to 7-cyano-7-deazaguanine (preQ(0)). The chain is 7-cyano-7-deazaguanine synthase from Vesicomyosocius okutanii subsp. Calyptogena okutanii (strain HA).